The chain runs to 322 residues: Cyanophycinase (322 aa).

Residues serine 178, glutamate 196, and histidine 220 each act as charge relay system in the active site.

This sequence belongs to the peptidase S51 family.

The enzyme catalyses [L-4-(L-arginin-2-N-yl)aspartate](n) + H2O = [L-4-(L-arginin-2-N-yl)aspartate](n-1) + L-4-(L-arginin-2-N-yl)aspartate. Its function is as follows. Exopeptidase that catalyzes the hydrolytic cleavage of multi-L-arginyl-poly-L-aspartic acid (cyanophycin; a water-insoluble reserve polymer) into aspartate-arginine dipeptides. This chain is Cyanophycinase (cphB), found in Synechococcus elongatus.